The primary structure comprises 109 residues: MKQDIYINIKAFDCSLLEECVRKFIDELKRSSAKLSGPIALPRKDSKFIVNRSPHVDKKSREQFEMRTSRRLIVLHDLTPTMMQMLTGLSFSAGVEVDLKVKEVKEVKV.

Belongs to the universal ribosomal protein uS10 family. As to quaternary structure, part of the 30S ribosomal subunit.

Its function is as follows. Involved in the binding of tRNA to the ribosomes. The polypeptide is Small ribosomal subunit protein uS10 (Wolbachia pipientis wMel).